A 100-amino-acid polypeptide reads, in one-letter code: MNPRQLEQMARQMQKEMMRIQEELANATVEGTAGSYITVTMNGHREIKSIKIAPEVVDPDDIETLQDLIVAAITDASKKAQELAEQRLGPLAGGMKLPGF.

This sequence belongs to the YbaB/EbfC family. Homodimer.

The protein localises to the cytoplasm. It localises to the nucleoid. Binds to DNA and alters its conformation. May be involved in regulation of gene expression, nucleoid organization and DNA protection. This is Nucleoid-associated protein Rcas_2292 from Roseiflexus castenholzii (strain DSM 13941 / HLO8).